The primary structure comprises 182 residues: MNRLSTKLVVAIGIGSALYGILGLWGFSIAPNTFIKPALAILTVFGALFGPVAGLLIGLIGHTVTDTIAGWSIWWGWVISSGIIGFTMGFIQKRVGFSVKNGTYNKGDISYLAITGLIGIVIAIIFAGAFDIIVMGEPFDKIVIQVLGATIADVIVFLVLGLPITIGLAKSNKKHTHLKIEK.

Transmembrane regions (helical) follow at residues 9–29, 40–60, 71–91, 114–134, and 142–162; these read VVAI…GFSI, AILT…IGLI, WSIW…MGFI, ITGL…DIIV, and IVIQ…VLGL.

Belongs to the UPF0397 family.

The protein resides in the cell membrane. The sequence is that of UPF0397 protein BA_2640/GBAA_2640/BAS2460 from Bacillus anthracis.